The sequence spans 240 residues: Uridylate kinase (240 aa).

ATP is bound at residue 9 to 12; the sequence is KLSG. Gly51 is a UMP binding site. ATP is bound by residues Gly52 and Arg56. UMP contacts are provided by residues Asp71 and 132-139; that span reads TGNPFFTT. Residues Thr159, Tyr165, and Asp168 each coordinate ATP.

This sequence belongs to the UMP kinase family. Homohexamer.

It is found in the cytoplasm. It carries out the reaction UMP + ATP = UDP + ADP. It functions in the pathway pyrimidine metabolism; CTP biosynthesis via de novo pathway; UDP from UMP (UMPK route): step 1/1. With respect to regulation, inhibited by UTP. Catalyzes the reversible phosphorylation of UMP to UDP. This Synechococcus elongatus (strain ATCC 33912 / PCC 7942 / FACHB-805) (Anacystis nidulans R2) protein is Uridylate kinase.